The primary structure comprises 1172 residues: Thrombospondin-2 (1172 aa).

The first 18 residues, 1–18 (MVWRLVLLALWVWPSTQA), serve as a signal peptide directing secretion. One can recognise a Laminin G-like domain in the interval 19 to 215 (GHQDKDTTFD…LQNVHLVFEN (197 aa)). The interval 19 to 232 (GHQDKDTTFD…KKGCQQGQGA (214 aa)) is heparin-binding. Asn151, Asn316, and Asn330 each carry an N-linked (GlcNAc...) asparagine glycan. The 58-residue stretch at 318-375 (SACWQDGRFFAENETWVVDSCTTCTCKKFKTICHQITCPPATCASPSFVEGECCPSCL) folds into the VWFC domain. 3 consecutive TSP type-1 domains span residues 381–431 (EEGW…SKCD), 437–492 (DGGW…APCP), and 494–549 (DGRW…RSCP). Intrachain disulfides connect Cys393–Cys425, Cys397–Cys430, Cys408–Cys415, Cys449–Cys486, Cys453–Cys491, Cys464–Cys476, Cys506–Cys543, Cys510–Cys548, Cys521–Cys533, Cys553–Cys564, Cys558–Cys574, Cys577–Cys588, Cys594–Cys610, Cys601–Cys619, Cys622–Cys646, Cys652–Cys665, Cys659–Cys678, Cys680–Cys691, Cys707–Cys715, Cys720–Cys740, Cys756–Cys776, Cys779–Cys799, Cys815–Cys835, Cys838–Cys858, Cys876–Cys896, Cys912–Cys932, and Cys948–Cys1169. N-linked (GlcNAc...) asparagine glycosylation occurs at Asn457. The region spanning 549 to 589 (PVDGCLSNPCFPGAQCSSFPDGSWSCGSCPVGFLGNGTHCE) is the EGF-like 1 domain. Asn584 carries an N-linked (GlcNAc...) asparagine glycan. One can recognise an EGF-like 2 domain in the interval 648–692 (PENPCKDKTHNCHKHAECIYLGHFSDPMYKCECQTGYAGDGLICG). 8 TSP type-3 repeats span residues 693–728 (EDSD…NSGQ), 729–764 (EDFD…NPRQ), 765–787 (ADYD…NPAQ), 788–823 (IDTD…NTDQ), 824–846 (RDTD…NPDQ), 847–884 (TDVD…NANQ), 885–920 (ADHD…NPDQ), and 921–956 (EDLD…AISE). N-linked (GlcNAc...) asparagine glycosylation occurs at Asn710. Residues 843–931 (NPDQTDVDND…DLDGDGRGDI (89 aa)) form a disordered region. Residues 847–866 (TDVDNDLVGDQCDNNEDIDD) are compositionally biased toward acidic residues. The segment covering 870-884 (QNNQDNCPYISNANQ) has biased composition (polar residues). Residues 896-905 (CDPDDDNDGV) show a composition bias toward acidic residues. Residues 928–930 (RGD) carry the Cell attachment site motif. Residues 960–1172 (RNFQMVPLDP…SDLKYECRDI (213 aa)) form the TSP C-terminal domain. N-linked (GlcNAc...) asparagine glycosylation occurs at Asn1069.

Belongs to the thrombospondin family. Homotrimer; disulfide-linked. Interacts (via the TSP type I repeats) with CD36; the interaction conveys an antiangiogenic effect. Interacts (via the TSP type I repeats) with HRG; the interaction blocks the antiangiogenic effect of THBS2 with CD36. Can bind to fibrinogen, fibronectin, laminin and type V collagen. As to expression, high expression in invertebral disk tissue.

Adhesive glycoprotein that mediates cell-to-cell and cell-to-matrix interactions. Ligand for CD36 mediating antiangiogenic properties. This is Thrombospondin-2 (THBS2) from Homo sapiens (Human).